Consider the following 1034-residue polypeptide: Protein argonaute 2 (1034 aa).

A disordered region spans residues 1–201; sequence MEHERGGGGR…PMRRPDGGGS (201 aa). The segment covering 18–125 has biased composition (gly residues); sequence GGRGGGGGDG…ESGGGGGRGG (108 aa). Low complexity predominate over residues 172–187; it reads VVRVQPPAPPVAVSRS. Residues 391–504 form the PAZ domain; the sequence is PVLDLVQKSV…VPIELCDLLE (114 aa). The region spanning 688–989 is the Piwi domain; sequence LLFCPMSDQH…AAYRGRLYYE (302 aa).

Belongs to the argonaute family. Ago subfamily.

Functionally, probably involved in the RNA silencing pathway. May bind to short RNAs such as microRNAs (miRNAs) or short interfering RNAs (siRNAs), and represses the translation of mRNAs which are complementary to them. The sequence is that of Protein argonaute 2 (AGO2) from Oryza sativa subsp. japonica (Rice).